Consider the following 208-residue polypeptide: Small ribosomal subunit protein uS4 (208 aa).

In terms of domain architecture, S4 RNA-binding spans 97 to 160 (SRLDNIVFRL…KKNDKIAEAL (64 aa)).

The protein belongs to the universal ribosomal protein uS4 family. In terms of assembly, part of the 30S ribosomal subunit. Contacts protein S5. The interaction surface between S4 and S5 is involved in control of translational fidelity.

In terms of biological role, one of the primary rRNA binding proteins, it binds directly to 16S rRNA where it nucleates assembly of the body of the 30S subunit. Functionally, with S5 and S12 plays an important role in translational accuracy. The protein is Small ribosomal subunit protein uS4 of Mesoplasma florum (strain ATCC 33453 / NBRC 100688 / NCTC 11704 / L1) (Acholeplasma florum).